The chain runs to 257 residues: GTP cyclohydrolase FolE2 (257 aa).

This sequence belongs to the GTP cyclohydrolase IV family.

The catalysed reaction is GTP + H2O = 7,8-dihydroneopterin 3'-triphosphate + formate + H(+). It functions in the pathway cofactor biosynthesis; 7,8-dihydroneopterin triphosphate biosynthesis; 7,8-dihydroneopterin triphosphate from GTP: step 1/1. Functionally, converts GTP to 7,8-dihydroneopterin triphosphate. This chain is GTP cyclohydrolase FolE2, found in Dictyoglomus turgidum (strain DSM 6724 / Z-1310).